The following is a 393-amino-acid chain: 4-hydroxyphenylpyruvate dioxygenase (393 aa).

Thr2 is subject to N-acetylthreonine. VOC domains lie at 18-149 (HFHS…LVEK) and 180-338 (IIDH…IFTK). Residue Lys132 is modified to N6-succinyllysine. Fe cation is bound at residue His183. 3 positions are modified to phosphoserine: Ser211, Ser226, and Ser250. His266 and Glu349 together coordinate Fe cation.

The protein belongs to the 4HPPD family. In terms of assembly, homodimer. It depends on Fe cation as a cofactor.

Its subcellular location is the cytoplasm. The protein localises to the endoplasmic reticulum membrane. It localises to the golgi apparatus membrane. The catalysed reaction is 3-(4-hydroxyphenyl)pyruvate + O2 = homogentisate + CO2. It functions in the pathway amino-acid degradation; L-phenylalanine degradation; acetoacetate and fumarate from L-phenylalanine: step 3/6. Functionally, catalyzes the conversion of 4-hydroxyphenylpyruvic acid to homogentisic acid, one of the steps in tyrosine catabolism. The protein is 4-hydroxyphenylpyruvate dioxygenase (Hpd) of Mus musculus (Mouse).